Consider the following 274-residue polypeptide: Nitrogenase iron protein (274 aa).

8-15 (GKGGIGKS) contacts ATP. Cysteine 94 contacts [4Fe-4S] cluster. Arginine 97 carries the ADP-ribosylarginine; by dinitrogenase reductase ADP-ribosyltransferase modification. Cysteine 131 is a binding site for [4Fe-4S] cluster.

It belongs to the NifH/BchL/ChlL family. Homodimer. [4Fe-4S] cluster is required as a cofactor. Post-translationally, the reversible ADP-ribosylation of Arg-97 inactivates the nitrogenase reductase and regulates nitrogenase activity.

The catalysed reaction is N2 + 8 reduced [2Fe-2S]-[ferredoxin] + 16 ATP + 16 H2O = H2 + 8 oxidized [2Fe-2S]-[ferredoxin] + 2 NH4(+) + 16 ADP + 16 phosphate + 6 H(+). Functionally, the key enzymatic reactions in nitrogen fixation are catalyzed by the nitrogenase complex, which has 2 components: the iron protein and the molybdenum-iron protein. The protein is Nitrogenase iron protein of Prosthecochloris aestuarii (strain DSM 271 / SK 413).